A 47-amino-acid chain; its full sequence is Delta-ctenitoxin-Pr2d (47 aa).

Disulfide bonds link Cys3-Cys17, Cys10-Cys23, Cys14-Cys46, Cys16-Cys31, and Cys25-Cys29.

In terms of tissue distribution, expressed by the venom gland.

Its subcellular location is the secreted. Its function is as follows. Blocks voltage-gated sodium channels (Nav). Causes rapid general spastic paralysis and death when injected in mice at dose levels of less than 2 ug per mouse. The sequence is that of Delta-ctenitoxin-Pr2d from Phoneutria reidyi (Brazilian Amazonian armed spider).